The sequence spans 240 residues: Uridylate kinase (240 aa).

Lys13–Gly16 is an ATP binding site. Positions Gly21–Gly26 are involved in allosteric activation by GTP. Gly55 contributes to the UMP binding site. Residues Gly56 and Arg60 each coordinate ATP. Residues Asp75 and Thr136 to Thr143 contribute to the UMP site. ATP is bound by residues Thr163, Gln164, Tyr169, and Asp172.

This sequence belongs to the UMP kinase family. Homohexamer.

The protein resides in the cytoplasm. The enzyme catalyses UMP + ATP = UDP + ADP. The protein operates within pyrimidine metabolism; CTP biosynthesis via de novo pathway; UDP from UMP (UMPK route): step 1/1. Allosterically activated by GTP. Inhibited by UTP. Functionally, catalyzes the reversible phosphorylation of UMP to UDP. This is Uridylate kinase from Brucella melitensis biotype 1 (strain ATCC 23456 / CCUG 17765 / NCTC 10094 / 16M).